We begin with the raw amino-acid sequence, 121 residues long: Small ribosomal subunit protein uS13 (121 aa).

A disordered region spans residues glycine 94–lysine 121. Over residues alanine 106–lysine 121 the composition is skewed to basic residues.

The protein belongs to the universal ribosomal protein uS13 family. Part of the 30S ribosomal subunit. Forms a loose heterodimer with protein S19. Forms two bridges to the 50S subunit in the 70S ribosome.

Located at the top of the head of the 30S subunit, it contacts several helices of the 16S rRNA. In the 70S ribosome it contacts the 23S rRNA (bridge B1a) and protein L5 of the 50S subunit (bridge B1b), connecting the 2 subunits; these bridges are implicated in subunit movement. Contacts the tRNAs in the A and P-sites. This Geobacillus sp. (strain WCH70) protein is Small ribosomal subunit protein uS13.